We begin with the raw amino-acid sequence, 162 residues long: SCF ubiquitin ligase complex protein SKP1a (162 aa).

N-acetylserine is present on Ser2. Residues 100–162 (ILAANYLDIK…NEWCEDKGGN (63 aa)) form an interaction with the F-box domain of F-box proteins region. Pro143 carries the 4-hydroxyproline modification. Residue Pro143 is glycosylated (O-linked (GlcNAc...) hydroxyproline).

The protein belongs to the SKP1 family. As to quaternary structure, multiprotein complex (SCF) with cullin and F-box-containing protein. Capable of undergoing aggregation. In terms of processing, O-linked glycan consists of linear Gal-Gal-Fuc-Gal-GlcNAc. FpaA and fpaB seem to be identically glycosylated. Glycosylation is required for nuclear enrichment. Post-translationally, hydroxylated by phyA.

Its subcellular location is the cytoplasm. It localises to the nucleus. This is SCF ubiquitin ligase complex protein SKP1a (fpaA) from Dictyostelium discoideum (Social amoeba).